Reading from the N-terminus, the 334-residue chain is Protein translocase subunit SecF (334 aa).

6 helical membrane-spanning segments follow: residues 18–38, 144–164, 168–190, 195–217, 258–278, and 279–299; these read VAAGLTLAFIAAGFVSFAVTG, GAAMAMLIASIFTLIYLAIRF, FGLAAVLSTTHDILITLAFIKIF, SLTVVAAILTLVGYSANDTIIIF, ATLALLLLAGEVIRPFAWVMA, and FGVVMATFSSIYVAGPLLLWI.

Belongs to the SecD/SecF family. SecF subfamily. In terms of assembly, forms a complex with SecD. Part of the essential Sec protein translocation apparatus which comprises SecA, SecYEG and auxiliary proteins SecDF. Other proteins may also be involved.

The protein resides in the cell inner membrane. In terms of biological role, part of the Sec protein translocase complex. Interacts with the SecYEG preprotein conducting channel. SecDF uses the proton motive force (PMF) to complete protein translocation after the ATP-dependent function of SecA. In Gemmatimonas aurantiaca (strain DSM 14586 / JCM 11422 / NBRC 100505 / T-27), this protein is Protein translocase subunit SecF.